The sequence spans 399 residues: Exodeoxyribonuclease 7 large subunit (399 aa).

It belongs to the XseA family. In terms of assembly, heterooligomer composed of large and small subunits.

Its subcellular location is the cytoplasm. The enzyme catalyses Exonucleolytic cleavage in either 5'- to 3'- or 3'- to 5'-direction to yield nucleoside 5'-phosphates.. Bidirectionally degrades single-stranded DNA into large acid-insoluble oligonucleotides, which are then degraded further into small acid-soluble oligonucleotides. The polypeptide is Exodeoxyribonuclease 7 large subunit (Clostridium botulinum (strain Eklund 17B / Type B)).